An 830-amino-acid chain; its full sequence is uncharacterized protein (830 aa).

Residues 1–12 (MEKASKNKESGV) are compositionally biased toward basic and acidic residues. The tract at residues 1 to 61 (MEKASKNKES…SIKSKNKKKT (61 aa)) is disordered. A compositionally biased stretch (polar residues) spans 15 to 25 (ANNSFLQNFGV). The region spanning 249-433 (TVSKSSASGG…YSLVKFLHIN (185 aa)) is the Helicase ATP-binding domain. An ATP-binding site is contributed by 262-269 (DDMGLGKT). Residues 384 to 387 (DEAH) carry the DEAH box motif. In terms of domain architecture, Helicase C-terminal spans 662 to 816 (EEDDTVRGLR…KSVFTSKKLT (155 aa)). Ser712 is modified (phosphoserine).

It belongs to the SNF2/RAD54 helicase family.

It localises to the nucleus. This is an uncharacterized protein from Schizosaccharomyces pombe (strain 972 / ATCC 24843) (Fission yeast).